Here is a 149-residue protein sequence, read N- to C-terminus: Protein AE7-like 2 (149 aa).

This sequence belongs to the MIP18 family.

May play a role in chromosome segregation through establishment of sister chromatid cohesion. Unable to complement ae7 mutants, and thus probably not involved in the cytosolic iron-sulfur assembly (CIA) pathway. The polypeptide is Protein AE7-like 2 (Arabidopsis thaliana (Mouse-ear cress)).